We begin with the raw amino-acid sequence, 299 residues long: Acetylglutamate kinase (299 aa).

Substrate-binding positions include 72 to 73, Arg94, and Asn196; that span reads GG.

Belongs to the acetylglutamate kinase family. ArgB subfamily.

The protein localises to the cytoplasm. The catalysed reaction is N-acetyl-L-glutamate + ATP = N-acetyl-L-glutamyl 5-phosphate + ADP. Its pathway is amino-acid biosynthesis; L-arginine biosynthesis; N(2)-acetyl-L-ornithine from L-glutamate: step 2/4. Its function is as follows. Catalyzes the ATP-dependent phosphorylation of N-acetyl-L-glutamate. This is Acetylglutamate kinase from Burkholderia vietnamiensis (strain G4 / LMG 22486) (Burkholderia cepacia (strain R1808)).